A 129-amino-acid chain; its full sequence is Large ribosomal subunit protein uL14m (129 aa).

It belongs to the universal ribosomal protein uL14 family.

Its subcellular location is the mitochondrion. The protein is Large ribosomal subunit protein uL14m (RPL14) of Acanthamoeba castellanii (Amoeba).